Consider the following 336-residue polypeptide: F420-dependent glucose-6-phosphate dehydrogenase (336 aa).

Residue Asp39 coordinates coenzyme F420-(gamma-Glu)n. His40 functions as the Proton donor in the catalytic mechanism. Coenzyme F420-(gamma-Glu)n contacts are provided by residues Thr76 and Thr107–Gly108. The Proton acceptor role is filled by Glu109. Residues Asn112, Gly177–Gly178, and Gln180–Val181 contribute to the coenzyme F420-(gamma-Glu)n site. 4 residues coordinate substrate: Thr195, Lys198, Lys259, and Arg283.

The protein belongs to the F420-dependent glucose-6-phosphate dehydrogenase family. Homodimer.

It carries out the reaction oxidized coenzyme F420-(gamma-L-Glu)(n) + D-glucose 6-phosphate + H(+) = 6-phospho-D-glucono-1,5-lactone + reduced coenzyme F420-(gamma-L-Glu)(n). Its function is as follows. Catalyzes the coenzyme F420-dependent oxidation of glucose 6-phosphate (G6P) to 6-phosphogluconolactone. Appears to have a role in resistance to oxidative stress, via its consumption of G6P that serves as a source of reducing power to combat oxidative stress in mycobacteria. This chain is F420-dependent glucose-6-phosphate dehydrogenase, found in Mycolicibacterium gilvum (strain PYR-GCK) (Mycobacterium gilvum (strain PYR-GCK)).